Consider the following 547-residue polypeptide: MFS-type transporter ltbE (547 aa).

The tract at residues 1 to 23 (MEIAAETTGPAGVTTDVTNAEES) is disordered. A run of 13 helical transmembrane segments spans residues 33–53 (QGWA…VLAI), 74–94 (DIGW…PTCG), 104–124 (WVYC…AVAP), 135–155 (ISGL…SYCV), 165–185 (PIVL…GGSI), 195–215 (FIFW…WFTL), 240–260 (ATLL…GGIV), 267–287 (KVFG…CLQW), 310–330 (GFMM…PIYF), 343–363 (INLL…GSLA), 370–390 (VPFM…YQLV), 399–419 (WIGF…MPIL), and 432–452 (TGLV…PSVG). Residue N463 is glycosylated (N-linked (GlcNAc...) asparagine). Residues 506 to 526 (VFWVGVATPALAWIASWAMEW) traverse the membrane as a helical segment.

Belongs to the major facilitator superfamily. TCR/Tet family.

It localises to the cell membrane. Functionally, MFS-type transporter; part of the gene cluster that mediates the biosynthesis of luteodienoside A, a glycosylated polyketide consisting of an unusual 1-O-beta-D-glucopyranosyl-myo-inositol (glucinol) ester of 3-hydroxy-2,2,4-trimethylocta-4,6-dienoic acid. LtbE is probably involved in the secretion of luteodienoside A. The sequence is that of MFS-type transporter ltbE from Aspergillus luteorubrus.